The chain runs to 20 residues: Pregnancy-associated glycoprotein 61C (20 aa).

The protein belongs to the peptidase A1 family. In terms of processing, N-glycosylated. In terms of tissue distribution, expressed in chorionic epithelium (trophectoderm).

Its subcellular location is the secreted. It localises to the extracellular space. The protein is Pregnancy-associated glycoprotein 61C of Bubalus bubalis (Domestic water buffalo).